Here is a 165-residue protein sequence, read N- to C-terminus: Large ribosomal subunit protein uL10 (165 aa).

This sequence belongs to the universal ribosomal protein uL10 family. As to quaternary structure, part of the ribosomal stalk of the 50S ribosomal subunit. The N-terminus interacts with L11 and the large rRNA to form the base of the stalk. The C-terminus forms an elongated spine to which L12 dimers bind in a sequential fashion forming a multimeric L10(L12)X complex.

Functionally, forms part of the ribosomal stalk, playing a central role in the interaction of the ribosome with GTP-bound translation factors. This Burkholderia multivorans (strain ATCC 17616 / 249) protein is Large ribosomal subunit protein uL10.